Reading from the N-terminus, the 170-residue chain is MIDGDGFRPNVGIVICNSHGQVFWAKRYGQHSWQFPQGGIDDGETPEQAMYRELYEEVGLTKNDVRILASSRHWLRYKLPKRLVRWDSKPVCIGQKQKWFLLRLECDESKVNMQRDRSPEFDGWRWVSYWYPVRQVVSFKRDVYRRALKEFAVIAMPFKERKFKRKGKKG.

A Nudix hydrolase domain is found at 6–149 (GFRPNVGIVI…KRDVYRRALK (144 aa)). Residues 38-59 (GGIDDGETPEQAMYRELYEEVG) carry the Nudix box motif.

The protein belongs to the Nudix hydrolase family. RppH subfamily. The cofactor is a divalent metal cation.

In terms of biological role, accelerates the degradation of transcripts by removing pyrophosphate from the 5'-end of triphosphorylated RNA, leading to a more labile monophosphorylated state that can stimulate subsequent ribonuclease cleavage. The chain is RNA pyrophosphohydrolase from Aliivibrio fischeri (strain ATCC 700601 / ES114) (Vibrio fischeri).